Reading from the N-terminus, the 327-residue chain is Phenylalanine--tRNA ligase alpha subunit (327 aa).

Mg(2+) is bound at residue E252.

It belongs to the class-II aminoacyl-tRNA synthetase family. Phe-tRNA synthetase alpha subunit type 1 subfamily. In terms of assembly, tetramer of two alpha and two beta subunits. Requires Mg(2+) as cofactor.

The protein localises to the cytoplasm. The enzyme catalyses tRNA(Phe) + L-phenylalanine + ATP = L-phenylalanyl-tRNA(Phe) + AMP + diphosphate + H(+). In Shewanella oneidensis (strain ATCC 700550 / JCM 31522 / CIP 106686 / LMG 19005 / NCIMB 14063 / MR-1), this protein is Phenylalanine--tRNA ligase alpha subunit.